A 141-amino-acid chain; its full sequence is Large ribosomal subunit protein uL11 (141 aa).

This sequence belongs to the universal ribosomal protein uL11 family. As to quaternary structure, part of the ribosomal stalk of the 50S ribosomal subunit. Interacts with L10 and the large rRNA to form the base of the stalk. L10 forms an elongated spine to which L12 dimers bind in a sequential fashion forming a multimeric L10(L12)X complex. Post-translationally, one or more lysine residues are methylated.

In terms of biological role, forms part of the ribosomal stalk which helps the ribosome interact with GTP-bound translation factors. The protein is Large ribosomal subunit protein uL11 of Alkaliphilus metalliredigens (strain QYMF).